Reading from the N-terminus, the 487-residue chain is Betaine aldehyde dehydrogenase (487 aa).

Residues Ser-26, Ile-27, and Asp-93 each coordinate K(+). 150–152 (GAW) contributes to the NAD(+) binding site. Residue Lys-162 is the Charge relay system of the active site. Residues 176 to 179 (KPSE) and 229 to 232 (SVPT) contribute to the NAD(+) site. Residue Leu-244 participates in K(+) binding. The active-site Proton acceptor is Glu-250. Positions 252, 284, and 384 each coordinate NAD(+). Cys-284 serves as the catalytic Nucleophile. At Cys-284 the chain carries Cysteine sulfenic acid (-SOH). Lys-454 and Gly-457 together coordinate K(+). Glu-461 serves as the catalytic Charge relay system.

The protein belongs to the aldehyde dehydrogenase family. As to quaternary structure, dimer of dimers. K(+) serves as cofactor.

The enzyme catalyses betaine aldehyde + NAD(+) + H2O = glycine betaine + NADH + 2 H(+). It functions in the pathway amine and polyamine biosynthesis; betaine biosynthesis via choline pathway; betaine from betaine aldehyde: step 1/1. In terms of biological role, involved in the biosynthesis of the osmoprotectant glycine betaine. Catalyzes the irreversible oxidation of betaine aldehyde to the corresponding acid. This chain is Betaine aldehyde dehydrogenase, found in Sinorhizobium fredii (strain NBRC 101917 / NGR234).